A 261-amino-acid polypeptide reads, in one-letter code: MAGQNARLNVVPTVTMLGVMKARLVGATRGHALLKKKSDALTVQFRALLKKIVTAKESMGDMMKTSSFALTEVKYVAGDNVKHVVLENVKEATLKVRSRTENIAGVKLPKFDHFSEGETKNDLTGLARGGQQVRACRVAYVKAIEVLVELASLQTSFLTLDEAIKTTNRRVNALENVVKPKLENTISYIKGELDELEREDFFRLKKIQGYKRREVERQAANAKEFAEEMVLEDISMQRGISINAARNFLVGGAEKDSDIIF.

Position 241 is a phosphoserine (serine 241).

The protein belongs to the V-ATPase D subunit family. V-ATPase is a heteromultimeric enzyme composed of a peripheral catalytic V1 complex (components A to H) attached to an integral membrane V0 proton pore complex (components: a, c, c'', d and e).

Its subcellular location is the vacuole membrane. Functionally, subunit of the peripheral V1 complex of vacuolar ATPase. V-ATPase is responsible for acidifying a variety of intracellular compartments in eukaryotic cells, thus providing most of the energy required for transport processes in the vacuolar system. This Arabidopsis thaliana (Mouse-ear cress) protein is V-type proton ATPase subunit D (VHA-D).